Consider the following 1220-residue polypeptide: MSMRFIVGRAGTGKSTLCRQEIHKESQEHPEGLPLILLVPEQATHQMEMSLAHDPQSGGILRAQVLSFRRLGWRVFSEVGGGGKAVIGEVGKRMLLRRLLLNHRSDLRVFARSATRPGMADLLAQAIAEFKIYRITPDQLRGIEDADELLLQKTHELAFLYEELNKSLGTAARDPDDELNLVAGKISQAPFLQGAKIWVDGFKGFTPQELYVIQAMLGTAAEITVSLPLDPELLKAGTPRFKPGEELFYEPRQTYQGLVDLAREAKASISHVFLTETHRFEKAGLKHLERFYNAYPTQTFPGGDDSTAPDPLGIALFPAANKRAEVEGVARELRRLAREEGRTWRDCSVVTRDLPGYQGIIEQVFNAHEIPYFLDHKRPVIHHPLLELLLSAIETVQKDWAYEPLFRCLKTDFFPCSKDRIDRLENYCLAYGIHGSAWKGNRSWSYYPDPNHKEETAGLNETRQIIYDLFSPFDQAIRPHPEAGGPSVTVAQITEAIYELLIRLKVPEHLQEWAEAAHSRGDLAEAQLQNQIWDAVIQVLDELVAGLGEEVMDLSDFAMILTSGLENLQLGLIPPGYDQVLVGSLDRSRNPETAVLFLLGANDGILPGKPSDEGVFDELERLRLESKGIMLAPKGKVQVYEEQYFIYTALTRAREQLYISYPLTDEEGRGLTVSPVIHRLKMIFPGLPEKYLSLDEEEPGALPHPYALLPAYALHLQKLRQGSSLSPLWQAIRLWFLSQTAAFPQVQLLEKGLRDQNEEGKLPQPLARQLYGKRLVTSVSRLELFARCPFAHFAQYGLKLKERSNYRLSPPDMGQFFHAVLHDYAIALRERGLDWGELSKEQSWQLVNETAEPIALQLQNKILLSNARYRYLTHKLKRTVHHAVRVLGEHARQGVFLPMELEVKFGPQEALPPLEVPLSGGNSLLLRGQIDRIDGAVLGHEIYLRIFDYKSREAHVSLNQIYHGLDLQLLAYLDAALQGAQILVSSSGLAEGSKGSEGSEGSEDSEDSTIHPAGFLYFPVLEPQLKSKTLLYPEQLEKDRIKAVKVKGYLLADRQVLLAMDRDLENSSLLGIKLTKSGEFKKGSPILTEEQFALLRKHLQHFLRCSGEALLEGDISITPYRQGKHTACQFCSYKPLCHFDPYLPENNYRNLPVIQDEEFWQRVQSQDSEQYPEQHPPTSVPGETSRRALQKDGGNSPRGQELIWLGEDEAGAGKEDDGHE.

One can recognise a UvrD-like helicase ATP-binding domain in the interval methionine 1–glutamate 281. An ATP-binding site is contributed by glycine 8–serine 15. Positions alanine 283–asparagine 590 constitute a UvrD-like helicase C-terminal domain. Cysteine 788 serves as a coordination point for [4Fe-4S] cluster. Positions leucine 989 to serine 1008 are disordered. Cysteine 1128, cysteine 1131, and cysteine 1137 together coordinate [4Fe-4S] cluster. Residues arginine 1162–tyrosine 1171 are compositionally biased toward polar residues. A disordered region spans residues arginine 1162–glutamate 1220. Basic and acidic residues predominate over residues glycine 1211–glutamate 1220.

It belongs to the helicase family. AddB/RexB type 1 subfamily. In terms of assembly, heterodimer of AddA and AddB. Mg(2+) serves as cofactor. It depends on [4Fe-4S] cluster as a cofactor.

Functionally, the heterodimer acts as both an ATP-dependent DNA helicase and an ATP-dependent, dual-direction single-stranded exonuclease. Recognizes the chi site generating a DNA molecule suitable for the initiation of homologous recombination. The AddB subunit has 5' -&gt; 3' nuclease activity but not helicase activity. The sequence is that of ATP-dependent helicase/deoxyribonuclease subunit B from Desulfitobacterium hafniense (strain Y51).